Consider the following 265-residue polypeptide: Orotidine 5'-phosphate decarboxylase (265 aa).

Residues D37, 59 to 61 (KTH), 91 to 100 (DRKFADIGNT), Y217, and R235 contribute to the substrate site. The active-site Proton donor is K93.

Belongs to the OMP decarboxylase family.

It carries out the reaction orotidine 5'-phosphate + H(+) = UMP + CO2. The protein operates within pyrimidine metabolism; UMP biosynthesis via de novo pathway; UMP from orotate: step 2/2. The sequence is that of Orotidine 5'-phosphate decarboxylase (URA3) from Diutina rugosa (Yeast).